A 174-amino-acid polypeptide reads, in one-letter code: V-type proton ATPase catalytic subunit A (174 aa).

The protein belongs to the ATPase alpha/beta chains family. In terms of assembly, V-ATPase is a heteromultimeric enzyme made up of two complexes: the ATP-hydrolytic V1 complex and the proton translocation V0 complex. The V1 complex consists of three catalytic AB heterodimers that form a heterohexamer, three peripheral stalks each consisting of EG heterodimers, one central rotor including subunits D and F, and the regulatory subunits C and H. The proton translocation complex V0 consists of the proton transport subunit a, a ring of proteolipid subunits c9c'', rotary subunit d, subunits e and f, and the accessory subunits ATP6AP1/Ac45 and ATP6AP2/PRR. Interacts with the V0 complex V-ATPase subunit a4 ATP6V0A4. Interacts with WFS1. Interacts with alpha-crystallin B chain/CRYAB and with MTOR, forming a ternary complex.

Its subcellular location is the cytoplasm. It is found in the cytosol. The protein resides in the cytoplasmic vesicle. The protein localises to the secretory vesicle. It localises to the clathrin-coated vesicle membrane. Its subcellular location is the lysosome. It catalyses the reaction ATP + H2O + 4 H(+)(in) = ADP + phosphate + 5 H(+)(out). With respect to regulation, ATP hydrolysis occurs at the interface between the nucleotide-binding domains of subunits A and B. ATP hydrolysis triggers a conformational change in the subunits D and F, which induces a shift of subunit d. The c-ring is subsequently rotated and results in a continuous proton translocation across the membrane. Its function is as follows. Catalytic subunit of the V1 complex of vacuolar(H+)-ATPase (V-ATPase), a multisubunit enzyme composed of a peripheral complex (V1) that hydrolyzes ATP and a membrane integral complex (V0) that translocates protons. V-ATPase is responsible for acidifying and maintaining the pH of intracellular compartments and in some cell types, is targeted to the plasma membrane, where it is responsible for acidifying the extracellular environment. In aerobic conditions, involved in intracellular iron homeostasis, thus triggering the activity of Fe(2+) prolyl hydroxylase (PHD) enzymes, and leading to HIF1A hydroxylation and subsequent proteasomal degradation. May play a role in neurite development and synaptic connectivity. This Mesocricetus auratus (Golden hamster) protein is V-type proton ATPase catalytic subunit A.